The chain runs to 207 residues: Crossover junction endodeoxyribonuclease RuvC (207 aa).

Residues aspartate 11, glutamate 71, and aspartate 143 contribute to the active site. Residues aspartate 11, glutamate 71, and aspartate 143 each contribute to the Mg(2+) site.

The protein belongs to the RuvC family. Homodimer which binds Holliday junction (HJ) DNA. The HJ becomes 2-fold symmetrical on binding to RuvC with unstacked arms; it has a different conformation from HJ DNA in complex with RuvA. In the full resolvosome a probable DNA-RuvA(4)-RuvB(12)-RuvC(2) complex forms which resolves the HJ. Mg(2+) serves as cofactor.

Its subcellular location is the cytoplasm. The enzyme catalyses Endonucleolytic cleavage at a junction such as a reciprocal single-stranded crossover between two homologous DNA duplexes (Holliday junction).. Its function is as follows. The RuvA-RuvB-RuvC complex processes Holliday junction (HJ) DNA during genetic recombination and DNA repair. Endonuclease that resolves HJ intermediates. Cleaves cruciform DNA by making single-stranded nicks across the HJ at symmetrical positions within the homologous arms, yielding a 5'-phosphate and a 3'-hydroxyl group; requires a central core of homology in the junction. The consensus cleavage sequence is 5'-(A/T)TT(C/G)-3'. Cleavage occurs on the 3'-side of the TT dinucleotide at the point of strand exchange. HJ branch migration catalyzed by RuvA-RuvB allows RuvC to scan DNA until it finds its consensus sequence, where it cleaves and resolves the cruciform DNA. This chain is Crossover junction endodeoxyribonuclease RuvC, found in Methylobacterium radiotolerans (strain ATCC 27329 / DSM 1819 / JCM 2831 / NBRC 15690 / NCIMB 10815 / 0-1).